We begin with the raw amino-acid sequence, 88 residues long: Small ribosomal subunit protein bS18 (88 aa).

The segment at 1–22 (MSTKNAKPKKEAQRRPSRKAKV) is disordered.

This sequence belongs to the bacterial ribosomal protein bS18 family. In terms of assembly, part of the 30S ribosomal subunit. Forms a tight heterodimer with protein bS6.

Functionally, binds as a heterodimer with protein bS6 to the central domain of the 16S rRNA, where it helps stabilize the platform of the 30S subunit. The sequence is that of Small ribosomal subunit protein bS18 (rpsR) from Thermus thermophilus.